The sequence spans 156 residues: 6,7-dimethyl-8-ribityllumazine synthase (156 aa).

5-amino-6-(D-ribitylamino)uracil-binding positions include F23, 57-59, and 81-83; these read AYE and AII. 86–87 contributes to the (2S)-2-hydroxy-3-oxobutyl phosphate binding site; sequence GT. H89 functions as the Proton donor in the catalytic mechanism. F114 lines the 5-amino-6-(D-ribitylamino)uracil pocket. R128 provides a ligand contact to (2S)-2-hydroxy-3-oxobutyl phosphate.

It belongs to the DMRL synthase family.

The enzyme catalyses (2S)-2-hydroxy-3-oxobutyl phosphate + 5-amino-6-(D-ribitylamino)uracil = 6,7-dimethyl-8-(1-D-ribityl)lumazine + phosphate + 2 H2O + H(+). Its pathway is cofactor biosynthesis; riboflavin biosynthesis; riboflavin from 2-hydroxy-3-oxobutyl phosphate and 5-amino-6-(D-ribitylamino)uracil: step 1/2. Functionally, catalyzes the formation of 6,7-dimethyl-8-ribityllumazine by condensation of 5-amino-6-(D-ribitylamino)uracil with 3,4-dihydroxy-2-butanone 4-phosphate. This is the penultimate step in the biosynthesis of riboflavin. The sequence is that of 6,7-dimethyl-8-ribityllumazine synthase from Helicobacter pylori (strain ATCC 700392 / 26695) (Campylobacter pylori).